We begin with the raw amino-acid sequence, 400 residues long: MAKLTVSDLDLKGKKVLMRVDFNVPIKDGVIGNDNRIVAALPTIKYVIEHGGKAILLSHLGRIKKEEDKPGLSMRPVAERLSNLLNKPVTFVPTTEGKQLEDAIDGLNDGDVLVMENTRYEDVKDGENVKRESGNDPELGKYWASLGDVFVNDAFGTAHRSHASNVGIASNMSQTAAGFLMEKEITFIGGAVDNPEHPFVAILGGAKVSDKIGVIDNLLAKADKILIGGGMTYTFYAAKGMKIGNSLVETDKIDLAKEILDKAGDKLVLPVDSVVAEKFDNDAPHKTVEGDVPDGYMALDIGPKSVAEFKDVLKDAKTVVWNGPMGVFEMSNYAEGTLEIGKFLGTLTNAKTIVGGGDSTAAVQQLGVADKLSHISTGGGASLEYLEGKTLPGIAAISDK.

Substrate contacts are provided by residues D21–N23, R36, H59–R62, R119, and R160. ATP contacts are provided by residues K211, E329, and G356–S359.

Belongs to the phosphoglycerate kinase family. Monomer.

It is found in the cytoplasm. It carries out the reaction (2R)-3-phosphoglycerate + ATP = (2R)-3-phospho-glyceroyl phosphate + ADP. Its pathway is carbohydrate degradation; glycolysis; pyruvate from D-glyceraldehyde 3-phosphate: step 2/5. The polypeptide is Phosphoglycerate kinase (Levilactobacillus brevis (strain ATCC 367 / BCRC 12310 / CIP 105137 / JCM 1170 / LMG 11437 / NCIMB 947 / NCTC 947) (Lactobacillus brevis)).